The primary structure comprises 406 residues: Vacuole membrane protein 1 (406 aa).

A compositionally biased stretch (basic and acidic residues) spans Met1 to Asn21. The disordered stretch occupies residues Met1–Arg35. Ala2 is modified (N-acetylalanine). Residues Ala2–Asn43 lie on the Cytoplasmic side of the membrane. The helical transmembrane segment at Ile44 to Ile64 threads the bilayer. Over Leu65 to Ser77 the chain is Extracellular. A helical transmembrane segment spans residues Ile78–Val98. Residues His99–Gln109 are Cytoplasmic-facing. A helical membrane pass occupies residues Phe110–Gly130. Residues Leu131–Lys250 lie on the Extracellular side of the membrane. A VTT domain region spans residues Gly173–Ile316. Residues Leu251–Phe271 form a helical membrane-spanning segment. Topologically, residues Asp272–Leu273 are cytoplasmic. A helical transmembrane segment spans residues Ala274–Ile294. Residues Gly295–Lys305 lie on the Extracellular side of the membrane. A helical transmembrane segment spans residues Ile306–Ala326. Topologically, residues Val327–Trp363 are cytoplasmic. A helical membrane pass occupies residues Leu364–Ile384. Residues Asn385–Lys406 are Extracellular-facing.

Belongs to the VMP1 family. As to quaternary structure, interacts with BECN1. Interacts with TJP1. Interacts with TP53INP2. Interacts with TMEM41B. Interacts with ATP2A2, PLN and SLN; competes with PLN and SLN to prevent them from forming an inhibitory complex with ATP2A2. Interacts with ATG2A.

Its subcellular location is the endoplasmic reticulum-Golgi intermediate compartment membrane. It localises to the cell membrane. It is found in the vacuole membrane. The protein localises to the endoplasmic reticulum membrane. It carries out the reaction a 1,2-diacyl-sn-glycero-3-phospho-L-serine(in) = a 1,2-diacyl-sn-glycero-3-phospho-L-serine(out). The enzyme catalyses cholesterol(in) = cholesterol(out). The catalysed reaction is a 1,2-diacyl-sn-glycero-3-phosphocholine(in) = a 1,2-diacyl-sn-glycero-3-phosphocholine(out). It catalyses the reaction a 1,2-diacyl-sn-glycero-3-phosphoethanolamine(in) = a 1,2-diacyl-sn-glycero-3-phosphoethanolamine(out). In terms of biological role, phospholipid scramblase involved in lipid homeostasis and membrane dynamics processes. Has phospholipid scramblase activity toward cholesterol and phosphatidylserine, as well as phosphatidylethanolamine and phosphatidylcholine. Required for autophagosome formation: participates in early stages of autophagosome biogenesis at the endoplasmic reticulum (ER) membrane by reequilibrating the leaflets of the ER as lipids are extracted by ATG2 (ATG2A or ATG2B) to mediate autophagosome assembly. Regulates ATP2A2 activity to control ER-isolation membrane contacts for autophagosome formation. In addition to autophagy, involved in other processes in which phospholipid scramblase activity is required. Modulates ER contacts with lipid droplets, mitochondria and endosomes. Plays an essential role in formation of cell junctions. Upon stress such as bacterial and viral infection, promotes formation of cytoplasmic vacuoles followed by cell death. Involved in the cytoplasmic vacuolization of acinar cells during the early stage of acute pancreatitis. Functionally, (Microbial infection) Host factor required for infection by all flaviviruses tested such as Zika virus and Yellow fever virus. Probably required post-entry of the virus to facilitate the ER membrane remodeling necessary to form replication organelles. This chain is Vacuole membrane protein 1, found in Homo sapiens (Human).